We begin with the raw amino-acid sequence, 51 residues long: Putative ribosomal protein eL39-like 5 (51 aa).

The protein belongs to the eukaryotic ribosomal protein eL39 family.

This is Putative ribosomal protein eL39-like 5 (RPL39P5) from Homo sapiens (Human).